We begin with the raw amino-acid sequence, 204 residues long: N-(5'-phosphoribosyl)anthranilate isomerase (204 aa).

Belongs to the TrpF family.

It carries out the reaction N-(5-phospho-beta-D-ribosyl)anthranilate = 1-(2-carboxyphenylamino)-1-deoxy-D-ribulose 5-phosphate. Its pathway is amino-acid biosynthesis; L-tryptophan biosynthesis; L-tryptophan from chorismate: step 3/5. This is N-(5'-phosphoribosyl)anthranilate isomerase from Oceanobacillus iheyensis (strain DSM 14371 / CIP 107618 / JCM 11309 / KCTC 3954 / HTE831).